The sequence spans 143 residues: Large ribosomal subunit protein uL13 (143 aa).

It belongs to the universal ribosomal protein uL13 family. Part of the 50S ribosomal subunit.

This protein is one of the early assembly proteins of the 50S ribosomal subunit, although it is not seen to bind rRNA by itself. It is important during the early stages of 50S assembly. This chain is Large ribosomal subunit protein uL13, found in Finegoldia magna (strain ATCC 29328 / DSM 20472 / WAL 2508) (Peptostreptococcus magnus).